Reading from the N-terminus, the 364-residue chain is MSRPLTFLGIESSCDDTAAAVVRADGARAEILSSVVDGQTALHAAFGGVVPEIAARAHAERLDLCVERALEEAGLGLRDLDGIAVTAGPGLIGGVLSGVMLAKGLAAGTGLPLVGVNHLAGHALTPRLTDGLAFPYLMLLVSGGHCQFLIARGAEEFSRLGGSIDDAPGEAFDKTAKLLGLPQPGGPSVEAEAATGDPRRFAFPRPMLDRPGCDMSFSGLKTALLRARDGLVAEKGGLTRADRADLCAGFQAAVVEVLAEKTRRALAVYAAEGAAEPALAVAGGVAANGPIRAALTSVAEAAGVRFLAPPLRLCTDNAAMIAWAGIERFRAGGRDGMELSARPRWPLDRSAPALIGSGRKGAKA.

Fe cation contacts are provided by histidine 118 and histidine 122. Substrate is bound by residues 140–144 (LVSGG), aspartate 173, glycine 186, and asparagine 288. Residue aspartate 316 participates in Fe cation binding.

It belongs to the KAE1 / TsaD family. The cofactor is Fe(2+).

The protein resides in the cytoplasm. The catalysed reaction is L-threonylcarbamoyladenylate + adenosine(37) in tRNA = N(6)-L-threonylcarbamoyladenosine(37) in tRNA + AMP + H(+). Required for the formation of a threonylcarbamoyl group on adenosine at position 37 (t(6)A37) in tRNAs that read codons beginning with adenine. Is involved in the transfer of the threonylcarbamoyl moiety of threonylcarbamoyl-AMP (TC-AMP) to the N6 group of A37, together with TsaE and TsaB. TsaD likely plays a direct catalytic role in this reaction. This chain is tRNA N6-adenosine threonylcarbamoyltransferase, found in Cereibacter sphaeroides (strain KD131 / KCTC 12085) (Rhodobacter sphaeroides).